The following is a 261-amino-acid chain: UPF0246 protein Daci_5283 (261 aa).

The protein belongs to the UPF0246 family.

The chain is UPF0246 protein Daci_5283 from Delftia acidovorans (strain DSM 14801 / SPH-1).